A 504-amino-acid polypeptide reads, in one-letter code: O-fucosyltransferase 39 (504 aa).

A helical; Signal-anchor for type II membrane protein transmembrane segment spans residues 11–27 (WILSMFFFVVLFCNNVS). Asparagine 115 is a glycosylation site (N-linked (GlcNAc...) asparagine). A substrate-binding site is contributed by 288–290 (HLR). N-linked (GlcNAc...) asparagine glycosylation is found at asparagine 359 and asparagine 460.

The protein belongs to the glycosyltransferase GT106 family.

Its subcellular location is the membrane. It functions in the pathway glycan metabolism. This Arabidopsis thaliana (Mouse-ear cress) protein is O-fucosyltransferase 39.